Here is a 695-residue protein sequence, read N- to C-terminus: Threonine--tRNA ligase (695 aa).

The TGS domain occupies 6–75 (SAIFVNTTDT…ETTATFTAVP (70 aa)). A catalytic region spans residues 274-580 (DHRRLGTELD…LLEHYAGAFP (307 aa)). C379, H430, and H557 together coordinate Zn(2+).

The protein belongs to the class-II aminoacyl-tRNA synthetase family. As to quaternary structure, homodimer. The cofactor is Zn(2+).

The protein localises to the cytoplasm. The enzyme catalyses tRNA(Thr) + L-threonine + ATP = L-threonyl-tRNA(Thr) + AMP + diphosphate + H(+). In terms of biological role, catalyzes the attachment of threonine to tRNA(Thr) in a two-step reaction: L-threonine is first activated by ATP to form Thr-AMP and then transferred to the acceptor end of tRNA(Thr). Also edits incorrectly charged L-seryl-tRNA(Thr). This chain is Threonine--tRNA ligase, found in Corynebacterium glutamicum (strain ATCC 13032 / DSM 20300 / JCM 1318 / BCRC 11384 / CCUG 27702 / LMG 3730 / NBRC 12168 / NCIMB 10025 / NRRL B-2784 / 534).